A 50-amino-acid polypeptide reads, in one-letter code: ATP synthase protein 8 (50 aa).

The chain crosses the membrane as a helical span at residues 13-32; the sequence is ITFTFIILAITVYILSKYIL.

This sequence belongs to the ATPase protein 8 family. In terms of assembly, F-type ATPases have 2 components, CF(1) - the catalytic core - and CF(0) - the membrane proton channel.

It localises to the mitochondrion membrane. Mitochondrial membrane ATP synthase (F(1)F(0) ATP synthase or Complex V) produces ATP from ADP in the presence of a proton gradient across the membrane which is generated by electron transport complexes of the respiratory chain. F-type ATPases consist of two structural domains, F(1) - containing the extramembraneous catalytic core and F(0) - containing the membrane proton channel, linked together by a central stalk and a peripheral stalk. During catalysis, ATP synthesis in the catalytic domain of F(1) is coupled via a rotary mechanism of the central stalk subunits to proton translocation. Part of the complex F(0) domain. Minor subunit located with subunit a in the membrane. The polypeptide is ATP synthase protein 8 (ATP8) (Podospora anserina (strain S / ATCC MYA-4624 / DSM 980 / FGSC 10383) (Pleurage anserina)).